The following is a 228-amino-acid chain: Probable transcriptional regulatory protein SilR (228 aa).

Positions 2-116 constitute a Response regulatory domain; sequence KILIVEDDIK…ELLARVRTLL (115 aa). Residue D51 is modified to 4-aspartylphosphate. Residues 125–225 constitute a DNA-binding region (ompR/PhoB-type); that stretch reads ESQLKVADLS…VRGVGYMLEI (101 aa).

Phosphorylated by SilS.

The protein localises to the cytoplasm. Functionally, component of the sil cation-efflux system that confers resistance to silver. Probable member of a two-component regulatory system SilS/SilR. In Salmonella typhimurium, this protein is Probable transcriptional regulatory protein SilR (silR).